A 404-amino-acid chain; its full sequence is Keratin, type I cuticular Ha3-II (404 aa).

Residues 1-56 are head; sequence MPYNFCLPSLSCRTSCSSRPCVPPSCHGYTLPGACNIPANVSNCNWFCEGSFNGSE. Residues 56–367 enclose the IF rod domain; it reads EKETMQFLND…SLLESEDCKL (312 aa). The tract at residues 57–91 is coil 1A; that stretch reads KETMQFLNDRLASYLEKVRQLERDNAELENLIRER. The interval 92 to 102 is linker 1; the sequence is SQQQEPLLCPS. Residues 103–203 are coil 1B; the sequence is YQSYFKTIEE…HEQEVNTLRC (101 aa). The segment at 204-219 is linker 12; it reads QLGDRLNVEVDAAPAV. The segment at 220-363 is coil 2; the sequence is DLNQVLNETR…NTYRSLLESE (144 aa). The tail stretch occupies residues 364–404; the sequence is DCKLPSNPCATTNACEKPIGSCVTNPCGPRSRCGPCNTFGY.

The protein belongs to the intermediate filament family.

This is Keratin, type I cuticular Ha3-II (KRT33B) from Homo sapiens (Human).